We begin with the raw amino-acid sequence, 145 residues long: Deoxyuridine 5'-triphosphate nucleotidohydrolase (145 aa).

Substrate contacts are provided by residues 62 to 64 (RSG), Asn-75, 79 to 81 (TVD), and Lys-89.

It belongs to the dUTPase family. Requires Mg(2+) as cofactor.

The catalysed reaction is dUTP + H2O = dUMP + diphosphate + H(+). Its pathway is pyrimidine metabolism; dUMP biosynthesis; dUMP from dCTP (dUTP route): step 2/2. In terms of biological role, this enzyme is involved in nucleotide metabolism: it produces dUMP, the immediate precursor of thymidine nucleotides and it decreases the intracellular concentration of dUTP so that uracil cannot be incorporated into DNA. This chain is Deoxyuridine 5'-triphosphate nucleotidohydrolase, found in Helicobacter pylori (strain ATCC 700392 / 26695) (Campylobacter pylori).